The sequence spans 247 residues: Probable transcriptional regulatory protein SynWH7803_1972 (247 aa).

Belongs to the TACO1 family.

It is found in the cytoplasm. In Synechococcus sp. (strain WH7803), this protein is Probable transcriptional regulatory protein SynWH7803_1972.